The following is a 63-amino-acid chain: UPF0337 protein SERP0494 (63 aa).

The segment at 1–46 (MAEDKFEQAKGNIKETVGNATDNKELEKDGKGDKASGKAKEAVENV) is disordered. Residues 22–46 (DNKELEKDGKGDKASGKAKEAVENV) show a composition bias toward basic and acidic residues.

This sequence belongs to the UPF0337 (CsbD) family.

The protein is UPF0337 protein SERP0494 of Staphylococcus epidermidis (strain ATCC 35984 / DSM 28319 / BCRC 17069 / CCUG 31568 / BM 3577 / RP62A).